The chain runs to 139 residues: Holo-[acyl-carrier-protein] synthase (139 aa).

The Mg(2+) site is built by aspartate 8 and glutamate 61.

The protein belongs to the P-Pant transferase superfamily. AcpS family. The cofactor is Mg(2+).

The protein resides in the cytoplasm. The catalysed reaction is apo-[ACP] + CoA = holo-[ACP] + adenosine 3',5'-bisphosphate + H(+). Its function is as follows. Transfers the 4'-phosphopantetheine moiety from coenzyme A to a Ser of acyl-carrier-protein. This is Holo-[acyl-carrier-protein] synthase from Rhodopseudomonas palustris (strain BisA53).